Reading from the N-terminus, the 163-residue chain is Putative 4-hydroxy-4-methyl-2-oxoglutarate aldolase (163 aa).

Substrate is bound by residues 76 to 79 (GDML) and arginine 98. Position 99 (aspartate 99) interacts with a divalent metal cation.

This sequence belongs to the class II aldolase/RraA-like family. Homotrimer. Requires a divalent metal cation as cofactor.

The enzyme catalyses 4-hydroxy-4-methyl-2-oxoglutarate = 2 pyruvate. The catalysed reaction is oxaloacetate + H(+) = pyruvate + CO2. Functionally, catalyzes the aldol cleavage of 4-hydroxy-4-methyl-2-oxoglutarate (HMG) into 2 molecules of pyruvate. Also contains a secondary oxaloacetate (OAA) decarboxylase activity due to the common pyruvate enolate transition state formed following C-C bond cleavage in the retro-aldol and decarboxylation reactions. The protein is Putative 4-hydroxy-4-methyl-2-oxoglutarate aldolase of Pseudomonas putida (strain W619).